The primary structure comprises 502 residues: ATP-dependent DNA helicase uvsW (502 aa).

A Helicase ATP-binding domain is found at 122–280; that stretch reads VFEGLVNRRR…QYVGMFGEIF (159 aa). 135-142 serves as a coordination point for ATP; the sequence is LPTSAGKS. The DEAH box motif lies at 232–235; sequence DECH. The Helicase C-terminal domain occupies 335-501; it reads WIAKLAIKLA…KFNYVMKTVN (167 aa).

Probably interacts with UvsW.1. Interacts with gp32. Requires Mg(2+) as cofactor.

The enzyme catalyses Couples ATP hydrolysis with the unwinding of duplex DNA by translocating in the 3'-5' direction.. It carries out the reaction ATP + H2O = ADP + phosphate + H(+). With respect to regulation, unwinding activity is strongly stimulated by single-stranded binding protein gp32, the ssDNA annealing activity is partially inhibited by gp32 and strongly inhibited by ATP-gamma-S. Another study did not find gp32 stimulation of helicase activity. Holliday junction (HJ) branch migration is inhibited by ATP-gamma-S. Plays important roles in recombination-dependent DNA repair and the reorganization of stalled replication forks during viral DNA synthesis. Active on in vivo-derived T4 DNA; viral DNA is highly modified by hydroxymethylation and glucosylation of cytosine residues. Helps process Holliday junction (HJ) intermediates to mature products by catalyzing branch migration. Probably able to catalyze replication fork regression. Unwinds HJ and Y-branched but not linear double-stranded (ds)DNA; unwinding requires ATP and Mg(2+). Unwinds dsDNA with a 3'-single-stranded (ss)DNA overhang, suggesting it is a 3'-5' helicase. Another study does not find this activity. Unwinds D- and R-loops. Also anneals ssDNA; ATP stimulates annealing. Has ssDNA and dsDNA-stimulated ATPase activity, also hydrolyzes GTP in the presence of DNA. This is ATP-dependent DNA helicase uvsW from Enterobacteria phage T4 (Bacteriophage T4).